The following is an 806-amino-acid chain: DEP domain-containing protein 1A (806 aa).

Residues 24 to 108 (FRAAMPLRKH…DNNSLYRFPS (85 aa)) form the DEP domain. A disordered region spans residues 142–177 (QFSKKTPKRRASVDSKEEQENEDLMEDQRNDDDFPK). The segment covering 167–177 (EDQRNDDDFPK) has biased composition (basic and acidic residues). Residues 279–319 (DYFLNLPEPLLTFEFYELFVNILVVCGYITVPNSHNGKHRF) form the Rho-GAP domain. The disordered stretch occupies residues 564 to 588 (SHSSFPSTSSLLPPTTSPNSTGSES).

In Xenopus laevis (African clawed frog), this protein is DEP domain-containing protein 1A (depdc1a).